Reading from the N-terminus, the 456-residue chain is MYRKKYSIHFVGIGGIGMSGIAELLLNLGYQVSGSDIKESDITQRLAKLGGTIYRGHRAENVKGCDVVVVSSAIRQENPETASAREQGIPVIPRAEMLAELMRLKYSVAIAGAHGKTTTTSIVADVLAAGGLDPTVVIGGKLLSIGSNAKLGHGEFIVAEADESDGSFLKMSPSIAVVTNIDREHMDHYKDMDEIKDAFAQFVDKIPFYGLSVLCLDSEPVQDLIPFINKRYVTYGLTTQADLQAGDVTTEGLTSRFTVRHNKKRLGRITLNLPGLHNVYNSLASIAVGLELNVPFENIKAALESLSGVHRRLETKGKVGGIVVMDDYGHHPTEIRTTLQAVNDSYPERRVGVIFQPHRYSRTQSLFEDFARSFYQADYLVVLPIYPAGEKPIPGVDSVSLCKALKAYGHKHVIHAPSKESALQELDKTVREGDVLITLGAGDVYRVGESFLASRS.

Residue 112–118 (GAHGKTT) coordinates ATP.

It belongs to the MurCDEF family.

It is found in the cytoplasm. The enzyme catalyses UDP-N-acetyl-alpha-D-muramate + L-alanine + ATP = UDP-N-acetyl-alpha-D-muramoyl-L-alanine + ADP + phosphate + H(+). The protein operates within cell wall biogenesis; peptidoglycan biosynthesis. In terms of biological role, cell wall formation. This Desulfatibacillum aliphaticivorans protein is UDP-N-acetylmuramate--L-alanine ligase.